A 506-amino-acid polypeptide reads, in one-letter code: MFAVELLERLGLPTIYLWIGFVLVVLLAYPTYFAIYNLYFHPLRKFPGPLIARSSYIWYAKNWIGGRWPHALSDLHEKYGQVVRIAPDELAFSSAQSWRDIYGHSVKGKKYFRKTDWYAGVGDLPNSISTEPDPQKHSAMRRVLANAFSNSVLKGQADVINKYLDMFVSQIKKHDNPNGIPVEEWFNWLTFDIIGDLTFHESFGAVENARTHFWIHLIINGNFIRSLYPIFQKIPISRLFMKWIIPNMDEIRQQRREHIAHTNSKAMKRANRDDIVQKDFFSFLLGKEGADTSEMFLTAQAHTLIIAGSETTAVTLTAMVSFLLRYPDKMKILIDEVRGAFTDKSQINVEGTLPLEYLFAVIEETLRILPPVPFGLPRTCPGAVIDGHVVPEGTIVSVSPYTASHDVRYWHDPEGWHPERWLPSDHPLHNPVFDQDNKEASKPFSTGPRVCLGVNLAYIELRMTLARLLFEFDMELLSKPVDWNTELDFFQFWKKVETRVKFTSLH.

The helical transmembrane segment at 15-35 threads the bilayer; sequence IYLWIGFVLVVLLAYPTYFAI. Cys-451 contacts heme.

Belongs to the cytochrome P450 family. Heme is required as a cofactor.

Its subcellular location is the membrane. Its pathway is polyketide biosynthesis. Its function is as follows. Cytochrome P450 monooxygenase; part of the gene cluster A that mediates the biosynthesis of botcinic acid and its botcinin derivatives, acetate-derived polyketides that contribute to virulence when combined with the sesquiterpene botrydial. Botcinic acid and its derivatives have been shown to induce chlorosis and necrosis during host plant infection, but also have antifungal activities. Two polyketide synthases, BOA6 and BOA9, are involved in the biosynthesis of botcinins. BOA6 mediates the formation of the per-methylated tetraketide core by condensation of four units of malonyl-CoA with one unit of acetyl-CoA, which would be methylated in activated methylene groups to yield a bicyclic acid intermediate that could then either be converted to botrylactone derivatives or lose the starter acetate unit through a retro-Claisen type C-C bond cleavage to yield botcinin derivatives. The second polyketide synthase, BOA9, is probably required for the biosynthesis of the tetraketide side chain of botcinins. The methyltransferase (MT) domain within BOA6 is probably responsible for the incorporation of four methyl groups. The trans-enoyl reductase BOA5 might take over the enoyl reductase function of BOA6 that misses an ER domain. The monooxygenases BOA2, BOA3 and BOA4 might be involved in further hydroxylations at C4, C5 and C8, whereas BOA7, close to BOA9, could potentially be involved in the hydroxylation at C4 in the side chain of botcinins. The polypeptide is Cytochrome P450 monooxygenase BOA3 (Botryotinia fuckeliana (strain B05.10) (Noble rot fungus)).